Reading from the N-terminus, the 460-residue chain is Proline--tRNA ligase (460 aa).

It belongs to the class-II aminoacyl-tRNA synthetase family. ProS type 3 subfamily. As to quaternary structure, homodimer.

The protein localises to the cytoplasm. It catalyses the reaction tRNA(Pro) + L-proline + ATP = L-prolyl-tRNA(Pro) + AMP + diphosphate. In terms of biological role, catalyzes the attachment of proline to tRNA(Pro) in a two-step reaction: proline is first activated by ATP to form Pro-AMP and then transferred to the acceptor end of tRNA(Pro). In Methanococcus maripaludis (strain C6 / ATCC BAA-1332), this protein is Proline--tRNA ligase.